Reading from the N-terminus, the 78-residue chain is 4-methyl-3-hydroxyanthranilic acid carrier protein (78 aa).

Position 33 is an O-(pantetheine 4'-phosphoryl)serine (S33).

Belongs to the acyl carrier protein (ACP) family. In terms of processing, 4'-phosphopantetheine is transferred from CoA to a specific serine of the apo-form of this carrier protein.

The protein operates within antibiotic biosynthesis. Functionally, involved in the biosynthesis of actinomycin. Acts as a carrier in the transfer and thioesterification of 4-methyl-3-hydroxyanthranilic acid (4-MHA). This Streptomyces anulatus (Streptomyces chrysomallus) protein is 4-methyl-3-hydroxyanthranilic acid carrier protein.